A 187-amino-acid chain; its full sequence is Lysozyme C-like protein DDB_G0288143 (187 aa).

An N-terminal signal peptide occupies residues Met1 to Ala23. 3 disulfides stabilise this stretch: Cys50/Cys125, Cys74/Cys82, and Cys78/Cys97. The active site involves Glu55. The segment at Gln133–Asn187 is disordered. Residues Ser136–Gly175 show a composition bias toward low complexity.

It belongs to the glycosyl hydrolase 22 family.

In Dictyostelium discoideum (Social amoeba), this protein is Lysozyme C-like protein DDB_G0288143.